We begin with the raw amino-acid sequence, 33 residues long: Photosystem II reaction center protein Psb30 (33 aa).

A helical transmembrane segment spans residues 5–25 (VVVQLGSLSLIVLAGPIIVLL).

The protein belongs to the Psb30/Ycf12 family. As to quaternary structure, PSII is composed of 1 copy each of membrane proteins PsbA, PsbB, PsbC, PsbD, PsbE, PsbF, PsbH, PsbI, PsbJ, PsbK, PsbL, PsbM, PsbT, PsbX, PsbY, PsbZ, Psb30/Ycf12, peripheral proteins of the oxygen-evolving complex and a large number of cofactors. It forms dimeric complexes.

The protein resides in the plastid. Its subcellular location is the chloroplast thylakoid membrane. A core subunit of photosystem II (PSII), probably helps stabilize the reaction center. In Mesostigma viride (Green alga), this protein is Photosystem II reaction center protein Psb30.